A 160-amino-acid chain; its full sequence is Probable chemoreceptor glutamine deamidase CheD 2 (160 aa).

It belongs to the CheD family.

The catalysed reaction is L-glutaminyl-[protein] + H2O = L-glutamyl-[protein] + NH4(+). Functionally, probably deamidates glutamine residues to glutamate on methyl-accepting chemotaxis receptors (MCPs), playing an important role in chemotaxis. This chain is Probable chemoreceptor glutamine deamidase CheD 2, found in Geobacter sulfurreducens (strain ATCC 51573 / DSM 12127 / PCA).